The following is a 438-amino-acid chain: UDP-N-acetylmuramoylalanine--D-glutamate ligase (438 aa).

Residue 112–118 participates in ATP binding; that stretch reads GSNGKST.

Belongs to the MurCDEF family.

It localises to the cytoplasm. The catalysed reaction is UDP-N-acetyl-alpha-D-muramoyl-L-alanine + D-glutamate + ATP = UDP-N-acetyl-alpha-D-muramoyl-L-alanyl-D-glutamate + ADP + phosphate + H(+). It functions in the pathway cell wall biogenesis; peptidoglycan biosynthesis. In terms of biological role, cell wall formation. Catalyzes the addition of glutamate to the nucleotide precursor UDP-N-acetylmuramoyl-L-alanine (UMA). The polypeptide is UDP-N-acetylmuramoylalanine--D-glutamate ligase (murD) (Escherichia coli O6:H1 (strain CFT073 / ATCC 700928 / UPEC)).